We begin with the raw amino-acid sequence, 54 residues long: MNSKQILSLSAFAMTIATAAAGNWNAGDTIALLIGIAMFFVLLLALLGWISRKK.

Residues 1–21 (MNSKQILSLSAFAMTIATAAA) form the signal peptide. Topologically, residues 22-29 (GNWNAGDT) are extracellular. The chain crosses the membrane as a helical span at residues 30–50 (IALLIGIAMFFVLLLALLGWI). Over 51–54 (SRKK) the chain is Cytoplasmic.

It is found in the membrane. This is an uncharacterized protein from Dictyostelium discoideum (Social amoeba).